The primary structure comprises 625 residues: Thioredoxin domain-containing protein 6 (625 aa).

Residues 158 to 302 (KSYTVAIIKP…FFFPNFKISN (145 aa)) are NDK. Residues 594 to 625 (GETPETSASDISRNAAAQGDDPEQDESKEMEE) form a disordered region. Over residues 613 to 625 (DDPEQDESKEMEE) the composition is skewed to acidic residues.

Belongs to the NDK family. In terms of assembly, monomer and homodimer.

It localises to the cytoplasm. It is found in the cytoskeleton. Its subcellular location is the cilium axoneme. The protein resides in the dynein axonemal particle. Its function is as follows. May be a regulator of microtubule physiology. The chain is Thioredoxin domain-containing protein 6 from Xenopus laevis (African clawed frog).